The following is a 532-amino-acid chain: Probable calcium-binding mitochondrial carrier CBG00135 (532 aa).

EF-hand domains are found at residues 70–105 (EKEK…QTPH), 107–136 (PATM…NYVI), 137–172 (AHEA…MGVN), and 173–208 (LDDH…YPST). Ca(2+) is bound by residues D83, D85, D87, S89, and D94. D150, N152, D154, E156, and E161 together coordinate Ca(2+). 3 Solcar repeats span residues 243 to 329 (GVWW…IKRW), 339 to 425 (LTTY…LKSC), and 436 to 526 (PGVL…VRKQ). 6 helical membrane-spanning segments follow: residues 249-266 (LVAG…TAPF), 304-323 (GNGI…FMSY), 349-362 (SSAG…IYPM), 400-419 (GYLP…LTVY), 442-459 (LACG…SYPL), and 501-518 (GITP…ISYV).

The protein belongs to the mitochondrial carrier (TC 2.A.29) family.

The protein localises to the mitochondrion inner membrane. Calcium-dependent mitochondrial solute carrier. The polypeptide is Probable calcium-binding mitochondrial carrier CBG00135 (Caenorhabditis briggsae).